Reading from the N-terminus, the 185-residue chain is NAD(P)H-quinone oxidoreductase subunit J (185 aa).

The protein belongs to the complex I 30 kDa subunit family. As to quaternary structure, NDH-1 can be composed of about 15 different subunits; different subcomplexes with different compositions have been identified which probably have different functions.

The protein localises to the cellular thylakoid membrane. The enzyme catalyses a plastoquinone + NADH + (n+1) H(+)(in) = a plastoquinol + NAD(+) + n H(+)(out). It catalyses the reaction a plastoquinone + NADPH + (n+1) H(+)(in) = a plastoquinol + NADP(+) + n H(+)(out). Functionally, NDH-1 shuttles electrons from an unknown electron donor, via FMN and iron-sulfur (Fe-S) centers, to quinones in the respiratory and/or the photosynthetic chain. The immediate electron acceptor for the enzyme in this species is believed to be plastoquinone. Couples the redox reaction to proton translocation, and thus conserves the redox energy in a proton gradient. Cyanobacterial NDH-1 also plays a role in inorganic carbon-concentration. This is NAD(P)H-quinone oxidoreductase subunit J from Prochlorococcus marinus (strain MIT 9303).